The primary structure comprises 93 residues: Acylphosphatase (93 aa).

C5 and C49 are disulfide-bonded. Positions 5-93 (CIIAWVYGRV…ETLTGFSIRY (89 aa)) constitute an Acylphosphatase-like domain. Residue N38 is part of the active site.

Belongs to the acylphosphatase family.

It catalyses the reaction an acyl phosphate + H2O = a carboxylate + phosphate + H(+). The protein is Acylphosphatase of Salmonella paratyphi A (strain ATCC 9150 / SARB42).